Here is a 430-residue protein sequence, read N- to C-terminus: MEIGLVHYRVGETDGVSLEMVKWKQALRNMHLKTYLIAGDMGTSPGFKIPYIAYTDKRSNILKQKSFVNLDEWDENYFKKEMNKYIEDIYNQLYEMMDLDVMIVNNIFSLAHNPAAAVAIYRFCKDNGIKMIGHHHDFYWERDFYKNPTNDYIKEILEEYFPPKDITHVVINSLAQEELKNKKGLDSIVIPNVFDFNQKRWEIDDYNIKIYDKLNISQKDLIFLQATRIVRRKAIELAIDTVAEVKKDLKKYIGKTTFNGKKITQDTNVFLVLPGLSEESDYVEVLKEYASQKDVELKLAFSISDDIRHEEEEIFSLWDFYAIADFITYPSILEGFGNQFLEAIFAKTPVLMFEYPVYKKDIAPLGFEVVSLGSKAEYERGMYRVNQNEIIKAKEEIFQILFDPQGLHRLSRRILNLGKNIFPMKLWRKS.

This sequence belongs to the glycosyltransferase group 1 family. It depends on a divalent metal cation as a cofactor.

The enzyme catalyses (2R)-2-O-(alpha-D-glucopyranosyl)-glycerate + GDP-alpha-D-mannose = (2R)-2-O-[alpha-D-mannopyranosyl-(1-&gt;2)-alpha-D-glucopyranosyl]-glycerate + GDP + H(+). Involved in the biosynthesis of the compatible solute mannosylglucosylglycerate through a nonphosphorylating pathway. Catalyzes the synthesis of mannosylglucosylglycerate (MGG) from glucosylglycerate (GG) and GDP-mannose. The protein is Mannosylglucosylglycerate synthase of Petrotoga mobilis (strain DSM 10674 / SJ95).